The chain runs to 499 residues: Glutelin type-B 1 (499 aa).

A signal peptide spans 1–24; it reads MASSVFSRFSIYFCVLLLCHGSMA. Intrachain disulfides connect Cys-45/Cys-78 and Cys-121/Cys-309. 2 consecutive Cupin type-1 domains span residues 50–247 and 315–464; these read LQAF…VAAK and VNIE…EQAR. A disordered region spans residues 467–499; that stretch reads KNNRGEEHGAFTPRFQQQYYPGLSNESESETSE.

The protein belongs to the 11S seed storage protein (globulins) family. As to quaternary structure, hexamer; each subunit is composed of an acidic and a basic chain derived from a single precursor and linked by a disulfide bond.

In terms of biological role, seed storage protein. The sequence is that of Glutelin type-B 1 (GluB1-A) from Oryza sativa subsp. japonica (Rice).